The sequence spans 348 residues: MTAPSQVLKIRRPDDWHVHLRDGDMLKTVVPYTSEIYGRAIVMPNLASPITTVDAAIAYRQRILDAVPAGHDFTPLMTCYLTDSLDADELERGFHEGVFTAAKLYPANATTNSSHGVTSVDAIMPVLERMEKLGMPLLVHGEVTHAEVDIFDREARFIDTVMEPLRQRLTALKVVFEHITTKDAAQYVRDGNDYLAATITPQHLMFNRNDMLVGGIRPHLYCLPILKRNIHQQALRELVASGFTRAFLGTDSAPHSRHRKETSCGCAGCFNAPSALGSYAAVFEEMNALAHFEAFCSLNGPQFYGLPVNAGWVELVRDEQQVPENIALADDSLVPFLAGETVRWSVKK.

Residues His17 and His19 each contribute to the Zn(2+) site. Substrate contacts are provided by residues 19–21 and Asn45; that span reads HLR. Lys103, His140, and His178 together coordinate Zn(2+). Residue Lys103 is modified to N6-carboxylysine. His140 is a substrate binding site. Residue Leu223 coordinates substrate. Residue Asp251 participates in Zn(2+) binding. The active site involves Asp251. Residues His255 and Ala267 each contribute to the substrate site.

The protein belongs to the metallo-dependent hydrolases superfamily. DHOase family. Class II DHOase subfamily. In terms of assembly, homodimer. It depends on Zn(2+) as a cofactor.

The enzyme catalyses (S)-dihydroorotate + H2O = N-carbamoyl-L-aspartate + H(+). The protein operates within pyrimidine metabolism; UMP biosynthesis via de novo pathway; (S)-dihydroorotate from bicarbonate: step 3/3. Its function is as follows. Catalyzes the reversible cyclization of carbamoyl aspartate to dihydroorotate. This Salmonella dublin (strain CT_02021853) protein is Dihydroorotase.